The following is a 369-amino-acid chain: H-2 class I histocompatibility antigen, K-K alpha chain (369 aa).

Positions 1-21 (MAPCMLLLLLAAALAPTQTRA) are cleaved as a signal peptide. The tract at residues 22 to 111 (GPHSLRYFHT…ALRYYNQSAG (90 aa)) is alpha-1. At 22–305 (GPHSLRYFHT…EPPPSTVSNT (284 aa)) the chain is on the extracellular side. N-linked (GlcNAc...) asparagine glycosylation is present at Asn-107. The tract at residues 112–203 (GSHTFQRMYG…QLGNATLPRT (92 aa)) is alpha-2. Cys-122 and Cys-185 are joined by a disulfide. Residue Asn-197 is glycosylated (N-linked (GlcNAc...) asparagine). Residues 204–295 (DSPKAHVTRH…GLPEPLTLRW (92 aa)) are alpha-3. One can recognise an Ig-like C1-type domain in the interval 206–294 (PKAHVTRHSR…QGLPEPLTLR (89 aa)). Cys-224 and Cys-280 are disulfide-bonded. The interval 296–305 (EPPPSTVSNT) is connecting peptide. Residues 306–328 (VIIAVLVVLGAAIVTGAVVAFVM) traverse the membrane as a helical segment. Residues 329-369 (KMRRRNTGGKGGDYALAPGSQTSDLSLPDCKVMVHDPHSLA) are Cytoplasmic-facing. Phosphoserine is present on residues Ser-351 and Ser-354.

The protein belongs to the MHC class I family. As to quaternary structure, heterodimer of an alpha chain and a beta chain (beta-2-microglobulin).

It is found in the membrane. Its function is as follows. Involved in the presentation of foreign antigens to the immune system. This is H-2 class I histocompatibility antigen, K-K alpha chain (H2-K1) from Mus musculus (Mouse).